The sequence spans 305 residues: Glycine--tRNA ligase alpha subunit (305 aa).

The protein belongs to the class-II aminoacyl-tRNA synthetase family. Tetramer of two alpha and two beta subunits.

The protein localises to the cytoplasm. It carries out the reaction tRNA(Gly) + glycine + ATP = glycyl-tRNA(Gly) + AMP + diphosphate. The sequence is that of Glycine--tRNA ligase alpha subunit from Streptococcus pyogenes serotype M12 (strain MGAS2096).